A 441-amino-acid polypeptide reads, in one-letter code: Ribosomal protein uS12 methylthiotransferase RimO (441 aa).

In terms of domain architecture, MTTase N-terminal spans 7–117; sequence PKISFVSLGC…VLEAVHRAKP (111 aa). Residues C16, C52, C81, C148, C152, and C155 each coordinate [4Fe-4S] cluster. Positions 134–371 constitute a Radical SAM core domain; that stretch reads LTPRHYAYLK…MARQQVISAR (238 aa). The TRAM domain maps to 374–440; that stretch reads KRKVGTRQQI…AYDLHGTVAG (67 aa).

This sequence belongs to the methylthiotransferase family. RimO subfamily. [4Fe-4S] cluster serves as cofactor.

It localises to the cytoplasm. It catalyses the reaction L-aspartate(89)-[ribosomal protein uS12]-hydrogen + (sulfur carrier)-SH + AH2 + 2 S-adenosyl-L-methionine = 3-methylsulfanyl-L-aspartate(89)-[ribosomal protein uS12]-hydrogen + (sulfur carrier)-H + 5'-deoxyadenosine + L-methionine + A + S-adenosyl-L-homocysteine + 2 H(+). In terms of biological role, catalyzes the methylthiolation of an aspartic acid residue of ribosomal protein uS12. In Rhodopseudomonas palustris (strain BisB5), this protein is Ribosomal protein uS12 methylthiotransferase RimO.